A 164-amino-acid polypeptide reads, in one-letter code: Lipoprotein signal peptidase (164 aa).

The next 4 helical transmembrane spans lie at Tyr11–Ser31, Val41–Leu61, Gln64–Val84, and Phe92–Ile112. Residues Asp122 and Asp140 contribute to the active site. Residues Phe132–Leu152 form a helical membrane-spanning segment.

The protein belongs to the peptidase A8 family.

It localises to the cell inner membrane. The catalysed reaction is Release of signal peptides from bacterial membrane prolipoproteins. Hydrolyzes -Xaa-Yaa-Zaa-|-(S,diacylglyceryl)Cys-, in which Xaa is hydrophobic (preferably Leu), and Yaa (Ala or Ser) and Zaa (Gly or Ala) have small, neutral side chains.. The protein operates within protein modification; lipoprotein biosynthesis (signal peptide cleavage). In terms of biological role, this protein specifically catalyzes the removal of signal peptides from prolipoproteins. This chain is Lipoprotein signal peptidase, found in Neisseria gonorrhoeae (strain ATCC 700825 / FA 1090).